A 242-amino-acid polypeptide reads, in one-letter code: Uridylate kinase (242 aa).

15-18 (KLSG) is an ATP binding site. Position 57 (Gly-57) interacts with UMP. Residues Gly-58 and Arg-62 each coordinate ATP. UMP-binding positions include Asp-78 and 139–146 (TGNPFFTT). Residues Thr-166, Tyr-172, and Asp-175 each coordinate ATP.

This sequence belongs to the UMP kinase family. As to quaternary structure, homohexamer.

The protein localises to the cytoplasm. It catalyses the reaction UMP + ATP = UDP + ADP. The protein operates within pyrimidine metabolism; CTP biosynthesis via de novo pathway; UDP from UMP (UMPK route): step 1/1. With respect to regulation, inhibited by UTP. Catalyzes the reversible phosphorylation of UMP to UDP. The polypeptide is Uridylate kinase (Acinetobacter baumannii (strain ATCC 17978 / DSM 105126 / CIP 53.77 / LMG 1025 / NCDC KC755 / 5377)).